Consider the following 813-residue polypeptide: Protein mac-1 (813 aa).

2 coiled-coil regions span residues 58–89 (VREA…VQEI) and 122–152 (SDDS…TVLN). Disordered stretches follow at residues 97–131 (TRKR…ERAA) and 152–193 (NLYT…GAVS). The span at 158 to 172 (SAPSTPVSTPKNQAT) shows a compositional bias: polar residues. Over residues 175 to 191 (PPGASAAPPALPRGLGA) the composition is skewed to low complexity. ATP-binding positions include 246-253 (GPPGCGKT) and 575-582 (GPPGCGKT).

Belongs to the AAA ATPase family. Found in a complex composed of ced-3, ced-4 and mac-1 or of ced-9, ced-4 and mac-1. Within the complex, interacts with ced-4.

In terms of biological role, probably together with ced-9, plays a modest role in preventing ced-4 and caspase ced-3-mediated apoptosis. The protein is Protein mac-1 of Caenorhabditis elegans.